A 176-amino-acid chain; its full sequence is ATP-dependent protease subunit HslV (176 aa).

T5 is an active-site residue. Na(+) contacts are provided by A161, C164, and T167.

Belongs to the peptidase T1B family. HslV subfamily. In terms of assembly, a double ring-shaped homohexamer of HslV is capped on each side by a ring-shaped HslU homohexamer. The assembly of the HslU/HslV complex is dependent on binding of ATP.

The protein resides in the cytoplasm. It carries out the reaction ATP-dependent cleavage of peptide bonds with broad specificity.. Its activity is regulated as follows. Allosterically activated by HslU binding. Its function is as follows. Protease subunit of a proteasome-like degradation complex believed to be a general protein degrading machinery. This chain is ATP-dependent protease subunit HslV, found in Desulforamulus reducens (strain ATCC BAA-1160 / DSM 100696 / MI-1) (Desulfotomaculum reducens).